The following is a 221-amino-acid chain: Pre-hexon-linking protein VIII (221 aa).

Phosphothreonine; by host is present on T65. Residues 113–150 constitute a propeptide that is removed on maturation; the sequence is AAPWSGVKTGSFCGRGLQLAEPPTTAIYPSGLFHLGRG.

Belongs to the adenoviridae hexon-linking protein family. As to quaternary structure, interacts with the peripentonal hexons as well as the hexons in the facets. Part of a complex composed of the core-capsid bridging protein, the endosome lysis protein VI and the hexon-linking protein VIII; these interactions bridge the virus core to the capsid. In terms of processing, cleaved by the viral protease during virion maturation. May cause the middle segment to be shed from the capsid.

It localises to the virion. The protein resides in the host nucleus. Its function is as follows. Structural component of the virion that acts as a cement protein on the capsid interior and which glue the peripentonal hexons and group-of-nine hexons together. This Sus scrofa (Pig) protein is Pre-hexon-linking protein VIII.